A 155-amino-acid polypeptide reads, in one-letter code: Acyl-CoA-binding domain-containing protein 3 (155 aa).

An ACB domain is found at 3–88 (LQEDFEEYAE…VKQLQEEAAA (86 aa)). An acyl-CoA contacts are provided by residues K15, 30–34 (YGLYK), K56, and Y75.

This sequence belongs to the ACBP family. As to expression, highly expressed in leaves. Expressed at low levels in roots and seeds.

The protein localises to the cytoplasm. It is found in the cytosol. Functionally, binds medium- and long-chain acyl-CoA esters with high affinity. Can interact in vitro with linolenoyl-CoA. Binds phosphatidic acid (PA) and phosphatidylcholine (PC) in vitro. May play a role in the biosynthesis of phospholipids. This chain is Acyl-CoA-binding domain-containing protein 3, found in Oryza sativa subsp. japonica (Rice).